The primary structure comprises 393 residues: Dual specificity mitogen-activated protein kinase kinase 1 (393 aa).

The segment at M1–E27 is disordered. In terms of domain architecture, Protein kinase spans F68–I361. ATP contacts are provided by residues L74–V82 and K97. Residue D190 is the Proton acceptor of the active site. S218 and S222 each carry phosphoserine; by RAF. Residues E270–P307 are RAF1-binding. T286 is subject to Phosphothreonine. Phosphothreonine; by MAPK1 is present on T292. Phosphoserine; by PAK is present on S298.

The protein belongs to the protein kinase superfamily. STE Ser/Thr protein kinase family. MAP kinase kinase subfamily. As to quaternary structure, found in a complex with at least BRAF, HRAS, MAP2K1, MAPK3/ERK1 and RGS14. Forms a heterodimer with MAP2K2/MEK2. Forms heterodimers with KSR2 which further dimerize to form tetramers. Interacts with KSR1 or KSR2 and BRAF; the interaction with KSR1 or KSR2 mediates KSR1-BRAF or KSR2-BRAF dimerization. Interacts with ARBB2, LAMTOR3, MAPK1/ERK2 and RAF1. Interacts with MAPK1/ERK2. Interacts with MORG1. Interacts with PPARG. Interacts with VRK2. Interacts with SGK1. Interacts with BIRC6/bruce. Interacts with KAT7; the interaction promotes KAT7 phosphorylation. Interacts with RAF1 and NEK10; the interaction is required for ERK1/2-signaling pathway activation in response to UV irradiation. Interacts with TRAF3IP3. Interacts with MOS. In terms of processing, phosphorylation at Ser-218 and Ser-222 by MAP kinase kinase kinases (BRAF or MEKK1) positively regulates kinase activity. Also phosphorylated at Thr-292 by MAPK1/ERK2 and at Ser-298 by PAK. MAPK1/ERK2 phosphorylation of Thr-292 occurs in response to cellular adhesion and leads to inhibition of Ser-298 phosphorylation by PAK. Autophosphorylated at Ser-218 and Ser-222, autophosphosphorylation is promoted by NEK10 following UV irradiation.

The protein localises to the cytoplasm. It localises to the cytoskeleton. The protein resides in the microtubule organizing center. Its subcellular location is the centrosome. It is found in the spindle pole body. The protein localises to the nucleus. It localises to the membrane. The catalysed reaction is L-seryl-[protein] + ATP = O-phospho-L-seryl-[protein] + ADP + H(+). The enzyme catalyses L-threonyl-[protein] + ATP = O-phospho-L-threonyl-[protein] + ADP + H(+). It carries out the reaction L-tyrosyl-[protein] + ATP = O-phospho-L-tyrosyl-[protein] + ADP + H(+). Its activity is regulated as follows. Ras proteins such as HRAS mediate the activation of RAF proteins such as RAF1 or BRAF which in turn activate extracellular signal-regulated kinases (ERK) through MAPK (mitogen-activated protein kinases) and ERK kinases MAP2K1/MEK1 and MAP2K2/MEK2. Activation occurs through phosphorylation of Ser-218 and Ser-222. MAP2K1/MEK1 binds KSR1 or KSR2 releasing the inhibitory intramolecular interaction between KSR1 or KSR2 protein kinase and N-terminal domains. This allows KSR1 or KSR2 dimerization with BRAF leading to BRAF activation and phosphorylation of MAP2K1. MAP2K1/MEK1 is also the target of negative feed-back regulation by its substrate kinases, such as MAPK1/ERK2. These phosphorylate MAP2K1/MEK1 on Thr-292, thereby facilitating dephosphorylation of the activating residues Ser-218 and Ser-222. Inhibited by serine/threonine phosphatase 2A. Its function is as follows. Dual specificity protein kinase which acts as an essential component of the MAP kinase signal transduction pathway. Binding of extracellular ligands such as growth factors, cytokines and hormones to their cell-surface receptors activates RAS and this initiates RAF1 activation. RAF1 then further activates the dual-specificity protein kinases MAP2K1/MEK1 and MAP2K2/MEK2. Both MAP2K1/MEK1 and MAP2K2/MEK2 function specifically in the MAPK/ERK cascade, and catalyze the concomitant phosphorylation of a threonine and a tyrosine residue in a Thr-Glu-Tyr sequence located in the extracellular signal-regulated kinases MAPK3/ERK1 and MAPK1/ERK2, leading to their activation and further transduction of the signal within the MAPK/ERK cascade. Activates BRAF in a KSR1 or KSR2-dependent manner; by binding to KSR1 or KSR2 releases the inhibitory intramolecular interaction between KSR1 or KSR2 protein kinase and N-terminal domains which promotes KSR1 or KSR2-BRAF dimerization and BRAF activation. Depending on the cellular context, this pathway mediates diverse biological functions such as cell growth, adhesion, survival and differentiation, predominantly through the regulation of transcription, metabolism and cytoskeletal rearrangements. One target of the MAPK/ERK cascade is peroxisome proliferator-activated receptor gamma (PPARG), a nuclear receptor that promotes differentiation and apoptosis. MAP2K1/MEK1 has been shown to export PPARG from the nucleus. The MAPK/ERK cascade is also involved in the regulation of endosomal dynamics, including lysosome processing and endosome cycling through the perinuclear recycling compartment (PNRC), as well as in the fragmentation of the Golgi apparatus during mitosis. In Rattus norvegicus (Rat), this protein is Dual specificity mitogen-activated protein kinase kinase 1.